We begin with the raw amino-acid sequence, 503 residues long: Aspartyl/glutamyl-tRNA(Asn/Gln) amidotransferase subunit B (503 aa).

The protein belongs to the GatB/GatE family. GatB subfamily. As to quaternary structure, heterotrimer of A, B and C subunits.

It catalyses the reaction L-glutamyl-tRNA(Gln) + L-glutamine + ATP + H2O = L-glutaminyl-tRNA(Gln) + L-glutamate + ADP + phosphate + H(+). The enzyme catalyses L-aspartyl-tRNA(Asn) + L-glutamine + ATP + H2O = L-asparaginyl-tRNA(Asn) + L-glutamate + ADP + phosphate + 2 H(+). Functionally, allows the formation of correctly charged Asn-tRNA(Asn) or Gln-tRNA(Gln) through the transamidation of misacylated Asp-tRNA(Asn) or Glu-tRNA(Gln) in organisms which lack either or both of asparaginyl-tRNA or glutaminyl-tRNA synthetases. The reaction takes place in the presence of glutamine and ATP through an activated phospho-Asp-tRNA(Asn) or phospho-Glu-tRNA(Gln). The polypeptide is Aspartyl/glutamyl-tRNA(Asn/Gln) amidotransferase subunit B (Roseobacter denitrificans (strain ATCC 33942 / OCh 114) (Erythrobacter sp. (strain OCh 114))).